The sequence spans 115 residues: Toxin-like structure LSTX-R1 (115 aa).

A signal peptide spans 1-18 (MKLSLIIIATSLVIAVVA). Residues 19–51 (FPSKDSAATDFDKTESLENVEERVETALDERPR) constitute a propeptide that is removed on maturation.

It belongs to the neurotoxin 25 family. F7 subfamily. In terms of processing, contains 4 disulfide bonds. Expressed by the venom gland.

Its subcellular location is the secreted. This is Toxin-like structure LSTX-R1 from Lycosa singoriensis (Wolf spider).